Here is a 342-residue protein sequence, read N- to C-terminus: Oxygen-dependent coproporphyrinogen-III oxidase (342 aa).

S98 is a substrate binding site. Residues H102 and H112 each coordinate a divalent metal cation. The active-site Proton donor is H112. 114–116 (NYR) serves as a coordination point for substrate. 2 residues coordinate a divalent metal cation: H146 and H176. An important for dimerization region spans residues 266-301 (YVEFNLVWDRGTIFGLQTNGRTESILMSLPPLARWE).

It belongs to the aerobic coproporphyrinogen-III oxidase family. As to quaternary structure, homodimer. A divalent metal cation is required as a cofactor.

Its subcellular location is the cytoplasm. It catalyses the reaction coproporphyrinogen III + O2 + 2 H(+) = protoporphyrinogen IX + 2 CO2 + 2 H2O. The protein operates within porphyrin-containing compound metabolism; protoporphyrin-IX biosynthesis; protoporphyrinogen-IX from coproporphyrinogen-III (O2 route): step 1/1. Its function is as follows. Involved in the heme and chlorophyll biosynthesis. Catalyzes the aerobic oxidative decarboxylation of propionate groups of rings A and B of coproporphyrinogen-III to yield the vinyl groups in protoporphyrinogen-IX. The chain is Oxygen-dependent coproporphyrinogen-III oxidase from Prochlorococcus marinus (strain MIT 9312).